The primary structure comprises 190 residues: Nuclear transcription factor Y subunit A-7 (190 aa).

Residues Met1–Arg33 form a disordered region. Basic and acidic residues predominate over residues Glu7–His24. The Subunit association domain (SAD) motif lies at Phe103–Asn126. Residues Lys133–Ala158 constitute a DNA-binding region (NFYA/HAP2-type). Residues Arg147 to Ser190 are disordered. Residues Ala158 to Ser174 are compositionally biased toward basic and acidic residues. Residues Ser177–Ser190 are compositionally biased toward low complexity.

The protein belongs to the NFYA/HAP2 subunit family. As to quaternary structure, heterotrimeric transcription factor composed of three components, NF-YA, NF-YB and NF-YC. NF-YB and NF-YC must interact and dimerize for NF-YA association and DNA binding.

It localises to the nucleus. In terms of biological role, stimulates the transcription of various genes by recognizing and binding to a CCAAT motif in promoters. The sequence is that of Nuclear transcription factor Y subunit A-7 (NFYA7) from Arabidopsis thaliana (Mouse-ear cress).